Here is a 478-residue protein sequence, read N- to C-terminus: Glutamate--tRNA ligase (478 aa).

The short motif at 23–33 (PSPTGFIHLGN) is the 'HIGH' region element. Over residues 130-145 (KQKPRYDGTWRPEEGK) the composition is skewed to basic and acidic residues. Residues 130-153 (KQKPRYDGTWRPEEGKTLPPVPEG) are disordered. Positions 255–259 (KMSKR) match the 'KMSKS' region motif. Lysine 258 lines the ATP pocket.

Belongs to the class-I aminoacyl-tRNA synthetase family. Glutamate--tRNA ligase type 1 subfamily. In terms of assembly, monomer.

Its subcellular location is the cytoplasm. It catalyses the reaction tRNA(Glu) + L-glutamate + ATP = L-glutamyl-tRNA(Glu) + AMP + diphosphate. In terms of biological role, catalyzes the attachment of glutamate to tRNA(Glu) in a two-step reaction: glutamate is first activated by ATP to form Glu-AMP and then transferred to the acceptor end of tRNA(Glu). The sequence is that of Glutamate--tRNA ligase from Paracidovorax citrulli (strain AAC00-1) (Acidovorax citrulli).